Here is a 517-residue protein sequence, read N- to C-terminus: Serine hydroxymethyltransferase 1, mitochondrial (517 aa).

A mitochondrion-targeting transit peptide spans 1-30 (MAMAMALRRLSSSIDKPIRPLIRSTSCYMS). N6-(pyridoxal phosphate)lysine is present on lysine 286.

It belongs to the SHMT family. In terms of assembly, homotetramer. Interacts with GLU1. Interacts with UBP16. The cofactor is pyridoxal 5'-phosphate. Post-translationally, ubiquitinated. Ubiquitous. Mostly expressed in leaves, less abundant in stems, flowers and siliques, and barely detectable in roots.

The protein localises to the mitochondrion. It localises to the cytoplasm. It carries out the reaction (6R)-5,10-methylene-5,6,7,8-tetrahydrofolate + glycine + H2O = (6S)-5,6,7,8-tetrahydrofolate + L-serine. Its pathway is one-carbon metabolism; tetrahydrofolate interconversion. Functionally, functions in the photorespiratory pathway in catalyzing the interconversion of serine and glycine. Involved in controlling cell damage caused by abiotic stress, such as high light and salt and the hypersensitive defense response of plants. The polypeptide is Serine hydroxymethyltransferase 1, mitochondrial (Arabidopsis thaliana (Mouse-ear cress)).